We begin with the raw amino-acid sequence, 38 residues long: MEVNILGLIATALFIVIPTSFLLILYIQTVASAKQQEQ.

The helical transmembrane segment at 5-25 (ILGLIATALFIVIPTSFLLIL) threads the bilayer.

The protein belongs to the PsbM family. In terms of assembly, PSII is composed of 1 copy each of membrane proteins PsbA, PsbB, PsbC, PsbD, PsbE, PsbF, PsbH, PsbI, PsbJ, PsbK, PsbL, PsbM, PsbT, PsbX, PsbY, PsbZ, Psb30/Ycf12, at least 3 peripheral proteins of the oxygen-evolving complex and a large number of cofactors. It forms dimeric complexes.

Its subcellular location is the plastid. It is found in the cyanelle thylakoid membrane. Its function is as follows. One of the components of the core complex of photosystem II (PSII). PSII is a light-driven water:plastoquinone oxidoreductase that uses light energy to abstract electrons from H(2)O, generating O(2) and a proton gradient subsequently used for ATP formation. It consists of a core antenna complex that captures photons, and an electron transfer chain that converts photonic excitation into a charge separation. This subunit is found at the monomer-monomer interface. The chain is Photosystem II reaction center protein M from Cyanophora paradoxa.